A 446-amino-acid chain; its full sequence is Amino-acid acetyltransferase (446 aa).

Residues 299 to 431 enclose the N-acetyltransferase domain; it reads EQVRDAEIDD…SHLPMKKQKL (133 aa).

This sequence belongs to the acetyltransferase family. ArgA subfamily.

It is found in the cytoplasm. It catalyses the reaction L-glutamate + acetyl-CoA = N-acetyl-L-glutamate + CoA + H(+). It functions in the pathway amino-acid biosynthesis; L-arginine biosynthesis; N(2)-acetyl-L-ornithine from L-glutamate: step 1/4. In Aliivibrio fischeri (strain MJ11) (Vibrio fischeri), this protein is Amino-acid acetyltransferase.